The primary structure comprises 576 residues: MNIQALLSEKVSHAMIAVGAPADCEPQVRQSAKAQFGDYQANGMMAVAKKMGMPPRQLAEKVLEQLDLSGIAAKVEIAGPGFINIFLAQEWLSAQIDGVLTAPKLGVAPVAPKTVVIDYSAPNVAKEMHVGHVRSTIIGDAAARTLEFLGHKVIRANHVGDWGTQFGMLIAFLEKQQSEHHEAIALADLEAFYREAKRTYDEDPAFAERARGYVVKLQGGDEYCRKMWKQLVDVTMTQNQLIYDRMNVTLTRDDVMGESLYNDMLPGIVADLKAKGLAVESEGATVVFLDEYKNKEGEPMGVIIRKKDGGYLYTTTDIACAKYRYETLKADRVLYYIDSRQHQHLMQAWTIVRKAGYVPDSIPLEHHMFGMMLGKDGKPFKTRAGGTIKLSDLLDEAVDRATKLVAEKNPDMPADELNALANIVGIGAVKYADLSKSRTTDYIFDWDNMLAFEGNTAPYMQYAYTRVLSVFRKAGIDAEAVSGVTRIVDDREAALAVRLLQFEETITQVARDGMPHVMCAYLYDLAGLFSGFYEHCPILNAEDEATKQSRLRLALLTAKTLKQGLDTLGIETVERM.

The short motif at 122-132 (PNVAKEMHVGH) is the 'HIGH' region element.

The protein belongs to the class-I aminoacyl-tRNA synthetase family. Monomer.

The protein resides in the cytoplasm. The enzyme catalyses tRNA(Arg) + L-arginine + ATP = L-arginyl-tRNA(Arg) + AMP + diphosphate. This is Arginine--tRNA ligase from Erwinia tasmaniensis (strain DSM 17950 / CFBP 7177 / CIP 109463 / NCPPB 4357 / Et1/99).